The following is a 140-amino-acid chain: Large ribosomal subunit protein uL16 (140 aa).

Residues 1–24 are disordered; the sequence is MALAPARTKYRKSQKGSRAGNAKR.

It belongs to the universal ribosomal protein uL16 family. Part of the 50S ribosomal subunit.

Functionally, binds 23S rRNA and is also seen to make contacts with the A and possibly P site tRNAs. This is Large ribosomal subunit protein uL16 from Opitutus terrae (strain DSM 11246 / JCM 15787 / PB90-1).